Here is a 218-residue protein sequence, read N- to C-terminus: Cell division protein SepF (218 aa).

A disordered region spans residues 25–115 (DVAASTDNVI…IANRREQYQQ (91 aa)). The span at 29–43 (STDNVIPRSQQSVRA) shows a compositional bias: polar residues. Residues 47 to 63 (PKQEPRNNHVQQDHQAR) are compositionally biased toward basic and acidic residues. Residues 102-115 (STSSIANRREQYQQ) show a composition bias toward polar residues.

This sequence belongs to the SepF family. In terms of assembly, homodimer. Interacts with FtsZ.

It localises to the cytoplasm. In terms of biological role, cell division protein that is part of the divisome complex and is recruited early to the Z-ring. Probably stimulates Z-ring formation, perhaps through the cross-linking of FtsZ protofilaments. Its function overlaps with FtsA. This is Cell division protein SepF from Streptococcus pyogenes serotype M5 (strain Manfredo).